Consider the following 255-residue polypeptide: UPF0246 protein Cphy_1568 (255 aa).

The protein belongs to the UPF0246 family.

The protein is UPF0246 protein Cphy_1568 of Lachnoclostridium phytofermentans (strain ATCC 700394 / DSM 18823 / ISDg) (Clostridium phytofermentans).